Consider the following 97-residue polypeptide: Small ribosomal subunit protein bS20 (97 aa).

It belongs to the bacterial ribosomal protein bS20 family.

Its function is as follows. Binds directly to 16S ribosomal RNA. The sequence is that of Small ribosomal subunit protein bS20 from Methylibium petroleiphilum (strain ATCC BAA-1232 / LMG 22953 / PM1).